The following is a 298-amino-acid chain: Glutamyl-Q tRNA(Asp) synthetase (298 aa).

Residues 9 to 13 and Glu-45 each bind L-glutamate; that span reads RFAPS. Residues 12–22 carry the 'HIGH' region motif; sequence PSPSGELHFGS. 4 residues coordinate Zn(2+): Cys-101, Cys-103, Tyr-115, and Cys-119. Residues Tyr-172 and Arg-190 each coordinate L-glutamate. The short motif at 228–232 is the 'KMSKS' region element; sequence KLSKQ. Lys-231 serves as a coordination point for ATP.

It belongs to the class-I aminoacyl-tRNA synthetase family. GluQ subfamily. Zn(2+) is required as a cofactor.

Catalyzes the tRNA-independent activation of glutamate in presence of ATP and the subsequent transfer of glutamate onto a tRNA(Asp). Glutamate is transferred on the 2-amino-5-(4,5-dihydroxy-2-cyclopenten-1-yl) moiety of the queuosine in the wobble position of the QUC anticodon. In Citrobacter koseri (strain ATCC BAA-895 / CDC 4225-83 / SGSC4696), this protein is Glutamyl-Q tRNA(Asp) synthetase.